A 453-amino-acid chain; its full sequence is Putative sodium-coupled neutral amino acid transporter 11 (453 aa).

The disordered stretch occupies residues methionine 1–serine 34. The span at leucine 12–glycine 32 shows a compositional bias: basic and acidic residues. The next 11 helical transmembrane spans lie at alanine 39–methionine 59, leucine 66–isoleucine 86, glycine 106–isoleucine 126, phenylalanine 152–leucine 172, leucine 179–threonine 199, alanine 222–valine 242, isoleucine 262–glycine 282, valine 299–phenylalanine 319, valine 337–isoleucine 357, cysteine 359–isoleucine 379, and methionine 399–isoleucine 419.

This sequence belongs to the amino acid/polyamine transporter 2 family. In terms of tissue distribution, widely expressed.

It localises to the membrane. Its function is as follows. Putative sodium-dependent amino acid/proton antiporter. This chain is Putative sodium-coupled neutral amino acid transporter 11 (Slc38a11), found in Rattus norvegicus (Rat).